The chain runs to 796 residues: Protein SEY1 homolog (796 aa).

The Cytoplasmic segment spans residues 1–701; that stretch reads MESSNDFSNK…AGTSISSWRN (701 aa). Residues 46–280 form the GB1/RHD3-type G domain; it reads GFRFNVVTIL…VPSDGFFVYS (235 aa). 56-63 serves as a coordination point for GTP; it reads GSQSSGKS. Positions 554-626 form a coiled coil; it reads SLVLLLKAAR…DALTLLKVLK (73 aa). A helical transmembrane segment spans residues 702-722; it reads IPPIFWLVLLVLGWNELRSVF. The Lumenal segment spans residues 723-725; sequence KVL. Residues 726 to 746 traverse the membrane as a helical segment; that stretch reads LRFYVVIPLLIVFYFTFSYSA. Topologically, residues 747-796 are cytoplasmic; the sequence is TKLLGPKADQYVKPVRDKVLSLFTALLAWFVRTLHMIASKSSSFKQRPAT.

It belongs to the TRAFAC class dynamin-like GTPase superfamily. GB1/RHD3 GTPase family. RHD3 subfamily.

The protein resides in the endoplasmic reticulum membrane. Probable GTP-binding protein that may be involved in cell development. In Theileria parva (East coast fever infection agent), this protein is Protein SEY1 homolog.